The chain runs to 240 residues: LexA repressor (240 aa).

Residues 26 to 46 (FDEMKDALDLKSKSGIHRLIT) constitute a DNA-binding region (H-T-H motif). Active-site for autocatalytic cleavage activity residues include Ser161 and Lys199.

This sequence belongs to the peptidase S24 family. Homodimer.

The catalysed reaction is Hydrolysis of Ala-|-Gly bond in repressor LexA.. Functionally, represses a number of genes involved in the response to DNA damage (SOS response), including recA and lexA. In the presence of single-stranded DNA, RecA interacts with LexA causing an autocatalytic cleavage which disrupts the DNA-binding part of LexA, leading to derepression of the SOS regulon and eventually DNA repair. The sequence is that of LexA repressor from Methylobacterium nodulans (strain LMG 21967 / CNCM I-2342 / ORS 2060).